The sequence spans 259 residues: Troponin T, fast skeletal muscle (259 aa).

Residues 1–36 show a composition bias toward acidic residues; sequence MSDEETEQVEEQYEEEEEAQEEEVQEEAPEPEEVQE. The disordered stretch occupies residues 1 to 62; it reads MSDEETEQVE…EKVDFDDIQK (62 aa). S2 is modified (N-acetylserine). Phosphoserine is present on S2. The segment covering 50–62 has biased composition (basic and acidic residues); the sequence is PEGEKVDFDDIQK. The residue at position 78 (S78) is a Phosphoserine. A compositionally biased stretch (basic and acidic residues) spans 101 to 143; it reads RAERAEQQRIRAEKERERQNRLAEEKARREEEDAKRRAEDDLK. Residues 101 to 180 are disordered; it reads RAERAEQQRI…TAREMKKKIL (80 aa). A phosphoserine mark is found at S149, S156, and S157. Residues 171–180 show a composition bias toward basic and acidic residues; sequence TAREMKKKIL. S193 carries the post-translational modification Phosphoserine. The residue at position 209 (Y209) is a Phosphotyrosine. Residues 235–259 form a disordered region; it reads RIDQAQKHSKKAGATAKGKVGGRWK.

Belongs to the troponin T family.

Troponin T is the tropomyosin-binding subunit of troponin, the thin filament regulatory complex which confers calcium-sensitivity to striated muscle actomyosin ATPase activity. The polypeptide is Troponin T, fast skeletal muscle (Tnnt3) (Rattus norvegicus (Rat)).